A 334-amino-acid chain; its full sequence is Dihydroorotate dehydrogenase (quinone) (334 aa).

FMN is bound by residues 61–65 and Thr85; that span reads AGLDK. Residue Lys65 participates in substrate binding. Position 110–114 (110–114) interacts with substrate; sequence NRMGF. FMN contacts are provided by Asn138 and Asn171. A substrate-binding site is contributed by Asn171. Ser174 serves as the catalytic Nucleophile. Asn176 serves as a coordination point for substrate. Residues Lys216 and Thr244 each coordinate FMN. Residue 245–246 participates in substrate binding; that stretch reads NT. FMN-binding positions include Gly266, Gly295, and 316 to 317; that span reads YT.

Belongs to the dihydroorotate dehydrogenase family. Type 2 subfamily. Monomer. FMN is required as a cofactor.

The protein localises to the cell membrane. The enzyme catalyses (S)-dihydroorotate + a quinone = orotate + a quinol. It functions in the pathway pyrimidine metabolism; UMP biosynthesis via de novo pathway; orotate from (S)-dihydroorotate (quinone route): step 1/1. Its function is as follows. Catalyzes the conversion of dihydroorotate to orotate with quinone as electron acceptor. The polypeptide is Dihydroorotate dehydrogenase (quinone) (Idiomarina loihiensis (strain ATCC BAA-735 / DSM 15497 / L2-TR)).